Here is a 322-residue protein sequence, read N- to C-terminus: Protein lin-56 (322 aa).

A disordered region spans residues 264 to 322 (SSQKLQQNGFPEKVEQMDKYSNKLKDEASDKKYEKPGKKDYVEEEGYWAPITDSEDDEA). The segment covering 275–304 (EKVEQMDKYSNKLKDEASDKKYEKPGKKDY) has biased composition (basic and acidic residues).

Widely expressed throughout embryonic development. Expressed in the six multipotent ventral ectodermal blast cells, P3.p-P8.p, which generate the vulva and in their descendants throughout vulval development.

The protein resides in the nucleus. Required for translation, stability and/or localization of lin-15a. This is Protein lin-56 (lin-56) from Caenorhabditis elegans.